A 326-amino-acid chain; its full sequence is Aspartate carbamoyltransferase catalytic subunit (326 aa).

Carbamoyl phosphate is bound by residues Arg60 and Thr61. Position 88 (Lys88) interacts with L-aspartate. Carbamoyl phosphate is bound by residues Arg110, His143, and Gln146. Arg183 and Arg239 together coordinate L-aspartate. Carbamoyl phosphate-binding residues include Gly280 and Pro281.

The protein belongs to the aspartate/ornithine carbamoyltransferase superfamily. ATCase family. As to quaternary structure, heterododecamer (2C3:3R2) of six catalytic PyrB chains organized as two trimers (C3), and six regulatory PyrI chains organized as three dimers (R2).

The enzyme catalyses carbamoyl phosphate + L-aspartate = N-carbamoyl-L-aspartate + phosphate + H(+). The protein operates within pyrimidine metabolism; UMP biosynthesis via de novo pathway; (S)-dihydroorotate from bicarbonate: step 2/3. In terms of biological role, catalyzes the condensation of carbamoyl phosphate and aspartate to form carbamoyl aspartate and inorganic phosphate, the committed step in the de novo pyrimidine nucleotide biosynthesis pathway. The sequence is that of Aspartate carbamoyltransferase catalytic subunit from Microcystis aeruginosa (strain NIES-843 / IAM M-2473).